We begin with the raw amino-acid sequence, 545 residues long: Eukaryotic translation initiation factor 3 subunit D-2 (545 aa).

Positions 99 to 113 (FRGNIRNNPRTRGRT) are enriched in basic residues. A disordered region spans residues 99–158 (FRGNIRNNPRTRGRTGRGGAVTGIGGNQPGVGVNERTKYGKGRDNRRQMGRRFGRNAPTR). The span at 114-127 (GRGGAVTGIGGNQP) shows a compositional bias: gly residues. A compositionally biased stretch (basic and acidic residues) spans 133 to 145 (ERTKYGKGRDNRR). Residues 287–301 (QFDLLTVNETALEPP) are RNA gate.

The protein belongs to the eIF-3 subunit D family. In terms of assembly, component of the eukaryotic translation initiation factor 3 (eIF-3) complex. The eIF-3 complex interacts with pix.

It localises to the cytoplasm. Functionally, mRNA cap-binding component of the eukaryotic translation initiation factor 3 (eIF-3) complex, which is involved in protein synthesis of a specialized repertoire of mRNAs and, together with other initiation factors, stimulates binding of mRNA and methionyl-tRNAi to the 40S ribosome. The eIF-3 complex specifically targets and initiates translation of a subset of mRNAs involved in cell proliferation. In the eIF-3 complex, eif3d specifically recognizes and binds the 7-methylguanosine cap of a subset of mRNAs. In Drosophila persimilis (Fruit fly), this protein is Eukaryotic translation initiation factor 3 subunit D-2.